Here is a 348-residue protein sequence, read N- to C-terminus: 4-hydroxyphenylpyruvate dioxygenase (348 aa).

2 VOC domains span residues 11–141 and 151–303; these read GFAF…ITSP and AIDH…IFTE. Residues His-154, His-232, and Glu-312 each coordinate Fe cation.

Belongs to the 4HPPD family. Requires Fe cation as cofactor.

It catalyses the reaction 3-(4-hydroxyphenyl)pyruvate + O2 = homogentisate + CO2. Its function is as follows. Catalyzes the transformation of p-hydroxyphenylpyruvate into HGA. Has hemolytic and brown pigment production activity. This is 4-hydroxyphenylpyruvate dioxygenase (lly) from Legionella pneumophila subsp. pneumophila (strain Philadelphia 1 / ATCC 33152 / DSM 7513).